Reading from the N-terminus, the 148-residue chain is 3-dehydroquinate dehydratase (148 aa).

Y23 (proton acceptor) is an active-site residue. Substrate contacts are provided by N74, H80, and D87. The Proton donor role is filled by H100. Substrate contacts are provided by residues 101-102 (IS) and R111.

Belongs to the type-II 3-dehydroquinase family. As to quaternary structure, homododecamer.

It carries out the reaction 3-dehydroquinate = 3-dehydroshikimate + H2O. The protein operates within metabolic intermediate biosynthesis; chorismate biosynthesis; chorismate from D-erythrose 4-phosphate and phosphoenolpyruvate: step 3/7. Its function is as follows. Catalyzes a trans-dehydration via an enolate intermediate. This chain is 3-dehydroquinate dehydratase, found in Caldanaerobacter subterraneus subsp. tengcongensis (strain DSM 15242 / JCM 11007 / NBRC 100824 / MB4) (Thermoanaerobacter tengcongensis).